The chain runs to 164 residues: 3-isopropylmalate dehydratase small subunit (164 aa).

This sequence belongs to the LeuD family. LeuD type 2 subfamily. As to quaternary structure, heterodimer of LeuC and LeuD.

The catalysed reaction is (2R,3S)-3-isopropylmalate = (2S)-2-isopropylmalate. The protein operates within amino-acid biosynthesis; L-leucine biosynthesis; L-leucine from 3-methyl-2-oxobutanoate: step 2/4. Its function is as follows. Catalyzes the isomerization between 2-isopropylmalate and 3-isopropylmalate, via the formation of 2-isopropylmaleate. The sequence is that of 3-isopropylmalate dehydratase small subunit from Syntrophus aciditrophicus (strain SB).